The primary structure comprises 163 residues: Phosphopantetheine adenylyltransferase (163 aa).

S9 lines the substrate pocket. ATP-binding positions include 9 to 10 (SF) and H17. The substrate site is built by K41, T73, and R87. Residues 88–90 (GLR), E98, and 123–129 (YSYLSSS) contribute to the ATP site.

It belongs to the bacterial CoaD family. Homohexamer. It depends on Mg(2+) as a cofactor.

The protein resides in the cytoplasm. It catalyses the reaction (R)-4'-phosphopantetheine + ATP + H(+) = 3'-dephospho-CoA + diphosphate. Its pathway is cofactor biosynthesis; coenzyme A biosynthesis; CoA from (R)-pantothenate: step 4/5. Functionally, reversibly transfers an adenylyl group from ATP to 4'-phosphopantetheine, yielding dephospho-CoA (dPCoA) and pyrophosphate. The polypeptide is Phosphopantetheine adenylyltransferase (Lachnoclostridium phytofermentans (strain ATCC 700394 / DSM 18823 / ISDg) (Clostridium phytofermentans)).